The sequence spans 148 residues: UPF0178 protein Mlg_1612 (148 aa).

This sequence belongs to the UPF0178 family.

The protein is UPF0178 protein Mlg_1612 of Alkalilimnicola ehrlichii (strain ATCC BAA-1101 / DSM 17681 / MLHE-1).